Reading from the N-terminus, the 410-residue chain is LL-diaminopimelate aminotransferase (410 aa).

Substrate-binding residues include Tyr-15 and Gly-42. Pyridoxal 5'-phosphate is bound by residues Tyr-72, 108 to 109 (SK), Tyr-132, Asn-187, Tyr-218, and 246 to 248 (SFS). 3 residues coordinate substrate: Lys-109, Tyr-132, and Asn-187. Residue Lys-249 is modified to N6-(pyridoxal phosphate)lysine. The pyridoxal 5'-phosphate site is built by Arg-257 and Asn-292. Asn-292 and Arg-388 together coordinate substrate.

Belongs to the class-I pyridoxal-phosphate-dependent aminotransferase family. LL-diaminopimelate aminotransferase subfamily. As to quaternary structure, homodimer. It depends on pyridoxal 5'-phosphate as a cofactor.

The enzyme catalyses (2S,6S)-2,6-diaminopimelate + 2-oxoglutarate = (S)-2,3,4,5-tetrahydrodipicolinate + L-glutamate + H2O + H(+). The protein operates within amino-acid biosynthesis; L-lysine biosynthesis via DAP pathway; LL-2,6-diaminopimelate from (S)-tetrahydrodipicolinate (aminotransferase route): step 1/1. Functionally, involved in the synthesis of meso-diaminopimelate (m-DAP or DL-DAP), required for both lysine and peptidoglycan biosynthesis. Catalyzes the direct conversion of tetrahydrodipicolinate to LL-diaminopimelate. The sequence is that of LL-diaminopimelate aminotransferase from Geotalea uraniireducens (strain Rf4) (Geobacter uraniireducens).